Reading from the N-terminus, the 504-residue chain is 2,3-bisphosphoglycerate-independent phosphoglycerate mutase (504 aa).

Positions 11 and 61 each coordinate Mn(2+). Ser-61 serves as the catalytic Phosphoserine intermediate. Residues His-122, Arg-152–Asp-153, Arg-183, Arg-189, Arg-255–Arg-258, and Lys-329 contribute to the substrate site. Residues Asp-396, His-400, Asp-437, His-438, and His-455 each contribute to the Mn(2+) site.

This sequence belongs to the BPG-independent phosphoglycerate mutase family. As to quaternary structure, monomer. The cofactor is Mn(2+).

The catalysed reaction is (2R)-2-phosphoglycerate = (2R)-3-phosphoglycerate. It functions in the pathway carbohydrate degradation; glycolysis; pyruvate from D-glyceraldehyde 3-phosphate: step 3/5. In terms of biological role, catalyzes the interconversion of 2-phosphoglycerate and 3-phosphoglycerate. The polypeptide is 2,3-bisphosphoglycerate-independent phosphoglycerate mutase (Bacteroides fragilis (strain ATCC 25285 / DSM 2151 / CCUG 4856 / JCM 11019 / LMG 10263 / NCTC 9343 / Onslow / VPI 2553 / EN-2)).